Reading from the N-terminus, the 260-residue chain is Type II methyltransferase M1.MboII (260 aa).

Residues cysteine 12, aspartate 30, lysine 197, 223–225 (SGT), and 241–242 (DM) contribute to the S-adenosyl-L-methionine site.

It belongs to the N(4)/N(6)-methyltransferase family. In terms of assembly, at low concentration exists as a monomer and homodimer. Probably binds to DNA as a monomer.

It carries out the reaction a 2'-deoxyadenosine in DNA + S-adenosyl-L-methionine = an N(6)-methyl-2'-deoxyadenosine in DNA + S-adenosyl-L-homocysteine + H(+). In terms of biological role, a beta subtype methylase that recognizes the double-stranded sequence 5'-GAAGA-3', methylates A-5 on the top strand, and protects the DNA from cleavage by the MboII endonuclease. It is not known if the cytosine of the complementary sequence TCTTC is also methylated by this enzyme. In Moraxella bovis, this protein is Type II methyltransferase M1.MboII.